The following is a 120-amino-acid chain: Glycine cleavage system H protein (120 aa).

In terms of domain architecture, Lipoyl-binding spans 17-99 (VATVGITAHA…MGAGWFFKLK (83 aa)). Residue Lys-58 is modified to N6-lipoyllysine.

It belongs to the GcvH family. As to quaternary structure, the glycine cleavage system is composed of four proteins: P, T, L and H. (R)-lipoate is required as a cofactor.

Its function is as follows. The glycine cleavage system catalyzes the degradation of glycine. The H protein shuttles the methylamine group of glycine from the P protein to the T protein. The polypeptide is Glycine cleavage system H protein (Rhizobium rhizogenes (strain K84 / ATCC BAA-868) (Agrobacterium radiobacter)).